A 404-amino-acid polypeptide reads, in one-letter code: Ubiquitin-like modifier-activating enzyme 5 (404 aa).

5 residues coordinate ATP: G83, D104, K127, N150, and N184. 2 residues coordinate Zn(2+): C226 and C229. The active-site Glycyl thioester intermediate is C250. Residues C303 and C308 each contribute to the Zn(2+) site. The disordered stretch occupies residues 372-393 (APEKSSETSEETVTAATADETS). Over residues 382-391 (ETVTAATADE) the composition is skewed to low complexity.

It belongs to the ubiquitin-activating E1 family. UBA5 subfamily.

Its function is as follows. E1-like enzyme which activates UFM1. In Drosophila sechellia (Fruit fly), this protein is Ubiquitin-like modifier-activating enzyme 5.